The sequence spans 798 residues: Phenylalanine--tRNA ligase beta subunit (798 aa).

A tRNA-binding domain is found at 39 to 148 (GKDLDNVVIG…EDAPIGTEYR (110 aa)). Residues 401 to 477 (PQRAEISLNL…RMYGFDNIEA (77 aa)) form the B5 domain. Mg(2+)-binding residues include Asp-455, Asp-461, Glu-464, and Glu-465. An FDX-ACB domain is found at 705–797 (SKYPEVLRDL…IKDKYNGEIR (93 aa)).

Belongs to the phenylalanyl-tRNA synthetase beta subunit family. Type 1 subfamily. Tetramer of two alpha and two beta subunits. Mg(2+) serves as cofactor.

Its subcellular location is the cytoplasm. It carries out the reaction tRNA(Phe) + L-phenylalanine + ATP = L-phenylalanyl-tRNA(Phe) + AMP + diphosphate + H(+). The chain is Phenylalanine--tRNA ligase beta subunit from Fusobacterium nucleatum subsp. nucleatum (strain ATCC 25586 / DSM 15643 / BCRC 10681 / CIP 101130 / JCM 8532 / KCTC 2640 / LMG 13131 / VPI 4355).